A 72-amino-acid chain; its full sequence is Translation initiation factor IF-1 (72 aa).

The S1-like domain occupies 1–72; sequence MSNDDSIEFE…TKGRITYRMK (72 aa).

Belongs to the IF-1 family. In terms of assembly, component of the 30S ribosomal translation pre-initiation complex which assembles on the 30S ribosome in the order IF-2 and IF-3, IF-1 and N-formylmethionyl-tRNA(fMet); mRNA recruitment can occur at any time during PIC assembly.

It localises to the cytoplasm. Functionally, one of the essential components for the initiation of protein synthesis. Stabilizes the binding of IF-2 and IF-3 on the 30S subunit to which N-formylmethionyl-tRNA(fMet) subsequently binds. Helps modulate mRNA selection, yielding the 30S pre-initiation complex (PIC). Upon addition of the 50S ribosomal subunit IF-1, IF-2 and IF-3 are released leaving the mature 70S translation initiation complex. The chain is Translation initiation factor IF-1 from Xanthomonas campestris pv. campestris (strain B100).